Consider the following 262-residue polypeptide: Acyl-[acyl-carrier-protein]--UDP-N-acetylglucosamine O-acyltransferase (262 aa).

The protein belongs to the transferase hexapeptide repeat family. LpxA subfamily. Homotrimer.

Its subcellular location is the cytoplasm. The enzyme catalyses a (3R)-hydroxyacyl-[ACP] + UDP-N-acetyl-alpha-D-glucosamine = a UDP-3-O-[(3R)-3-hydroxyacyl]-N-acetyl-alpha-D-glucosamine + holo-[ACP]. Its pathway is glycolipid biosynthesis; lipid IV(A) biosynthesis; lipid IV(A) from (3R)-3-hydroxytetradecanoyl-[acyl-carrier-protein] and UDP-N-acetyl-alpha-D-glucosamine: step 1/6. Functionally, involved in the biosynthesis of lipid A, a phosphorylated glycolipid that anchors the lipopolysaccharide to the outer membrane of the cell. This chain is Acyl-[acyl-carrier-protein]--UDP-N-acetylglucosamine O-acyltransferase, found in Salmonella heidelberg (strain SL476).